Here is a 606-residue protein sequence, read N- to C-terminus: MGIAEVALHSMPGAFAAHSPASNLPLAADAARGRRRRSANSLHSSRALQGPVRFPGLRAAVECQCQRIDDLARVTEGNGAWVKDAVDKASHALGDVRVPGQAVGGNGSVNGSAAKPPPQRRKASSVEDEAWELLRESVVYYCGSPVGTIAANDPNDANPMNYDQVFIRDFIPSGIAFLLKGEYEIVRNFILHTLQLQSWEKTMDCHSPGQGLMPASFKVRTIPLDGDEDATEEVLDPDFGEAAIGRVAPVDSGLWWIILLRAYGKCSGDLTVQERIDVQTGIKMILKLCLADGFDMFPTLLVTDGSCMIDRRMGIHGHPLEIQALFYSALLCAREMLTPEDGSADLIRALNNRLIALSFHIREYYWVDMQKLNEIYRYKTEEYSYDAVNKFNIYPDQVSPWLVEWIPPKGGYFIGNLQPAHMDFRFFSLGNLWSIVSSLATTHQSHAILDLIESKWSDLVAEMPLKICYPALENQEWKIITGSDPKNTPWSYHNGGSWPTLLWQLTVASIKMNRPEIAAKAVEVAERRIAIDKWPEYYDTKRARFIGKQSRLYQTWSIAGYLVAKQLLDKPDAARILSNDEDSEILNALSTNRKRGKKVLKKTFIV.

A chloroplast-targeting transit peptide spans methionine 1–arginine 58. The tract at residues arginine 97–valine 126 is disordered.

The protein belongs to the glycosyl hydrolase 100 family.

The protein resides in the plastid. The protein localises to the chloroplast. It carries out the reaction Hydrolysis of terminal non-reducing beta-D-fructofuranoside residues in beta-D-fructofuranosides.. Mitochondrial invertase that cleaves sucrose into glucose and fructose. The chain is Neutral/alkaline invertase 3, chloroplastic from Oryza sativa subsp. japonica (Rice).